A 1335-amino-acid chain; its full sequence is Regulatory-associated protein of mTOR (1335 aa).

2 positions are modified to phosphoserine: Ser-44 and Ser-122. Ser-696 is subject to Phosphoserine; by MAPK8. An O-linked (GlcNAc) threonine glycan is attached at Thr-700. Thr-706 is subject to Phosphothreonine; by MAPK8. Phosphoserine; by RPS6KA1 occurs at positions 719 and 721. Ser-722 is modified (phosphoserine; by AMPK and RPS6KA1). Ser-738 carries the phosphoserine modification. The tract at residues 749–771 (GSSVAFSPGNLSTSSSASSTLGS) is disordered. Residues 755 to 771 (SPGNLSTSSSASSTLGS) are compositionally biased toward low complexity. Position 791 is a phosphoserine (Ser-791). Phosphoserine; by AMPK is present on Ser-792. Residues Ser-836 and Ser-855 each carry the phosphoserine modification. The span at 853–866 (TSSLTQSAPASPTN) shows a compositional bias: polar residues. A disordered region spans residues 853–942 (TSSLTQSAPA…GPDQTTDDAD (90 aa)). Ser-859 is modified (phosphoserine; by MTOR). Ser-863 is modified (phosphoserine; by MAPK8, MTOR and NLK). Position 865 is a phosphothreonine (Thr-865). Ser-877 carries the post-translational modification Phosphoserine. Residues 877–887 (SPPASSTSSCS) show a composition bias toward low complexity. Positions 888-898 (LTNDVAKQTVS) are enriched in polar residues. Residues Lys-932 and Lys-948 each participate in a glycyl lysine isopeptide (Lys-Gly) (interchain with G-Cter in ubiquitin) cross-link. Residue Ser-982 is modified to Phosphoserine. WD repeat units follow at residues 1020–1061 (NRNP…DYFH), 1065–1106 (PRYT…EKNP), 1121–1160 (TTRG…KVQD), 1164–1203 (GADS…SECR), 1209–1249 (EHTA…SVNV), 1251–1291 (QIVK…NNIK), and 1299–1335 (QRVG…KRVR). At Lys-1097 the chain carries N6-acetyllysine.

The protein belongs to the WD repeat RAPTOR family. In terms of assembly, part of the mechanistic target of rapamycin complex 1 (mTORC1) which contains MTOR, MLST8 and RPTOR. mTORC1 associates with AKT1S1/PRAS40, which inhibits its activity. mTORC1 associates with DEPTOR, which regulates its activity. mTORC1 binds to and is inhibited by FKBP12-rapamycin. Forms a complex with MTOR under both leucine-rich and -poor conditions. Interacts with (via TOS motifs) EIF4EBP1 and RPS6KB1; interaction is independent of its association with MTOR. Binds preferentially to poorly or non-phosphorylated forms of EIF4EBP1, and this binding is critical to the ability of MTOR to catalyze phosphorylation. Interacts with ULK1 in a nutrient-dependent manner; the interaction is reduced during starvation. Interacts with GTP-bound form of RagA/RRAGA or RagB/RRAGB and GDP-bound form of RagC/RRAGC or RagD/RRAGD, promoting recruitment of mTORC1 to the lysosomes. Interacts (when phosphorylated by AMPK) with 14-3-3 protein, leading to inhibition of its activity. Interacts with SPAG5; SPAG5 competes with MTOR for RPTOR-binding, resulting in decreased mTORC1 formation. Interacts with WAC; WAC positively regulates MTOR activity by promoting the assembly of the TTT complex composed of TELO2, TTI1 and TTI2 and the RUVBL complex composed of RUVBL1 and RUVBL2 into the TTT-RUVBL complex which leads to the dimerization of the mTORC1 complex and its subsequent activation. Interacts with G3BP1. The complex formed with G3BP1 and SPAG5 is increased by oxidative stress. Interacts with HTR6. Interacts with PIH1D1. Interacts with LARP1. Interacts with BRAT1. Interacts with SIK3. Interacts with SLC38A7; this interaction mediates the recruitment of mTORC1 to the lysosome and its subsequent activation. In terms of processing, insulin-stimulated phosphorylation at Ser-863 by MTOR and MAPK8 regulates mTORC1 activity. Phosphorylated at Ser-863 by NLK in response to stress, disrupting the interaction with small GTPases Rag (RagA/RRAGA, RagB/RRAGB, RagC/RRAGC and/or RagD/RRAGD), thereby preventing lysosome recruitment and activation of the mTORC1 complex. Osmotic stress also induces phosphorylation at Ser-696, Thr-706 and Ser-863 by MAPK8. Ser-863 phosphorylation is required for phosphorylation at Ser-855 and Ser-859. In response to nutrient limitation, phosphorylated at Ser-722 and Ser-792 by AMPK; phosphorylation promotes interaction with 14-3-3 proteins, leading to negative regulation of the mTORC1 complex. Phosphorylation at Ser-722 and Ser-792 by AMPK in response to glucose starvation inhibits O-GlcNAcylation by OGT and subsequent activation of mTORC1. In response to growth factors, phosphorylated at Ser-719, Ser-721 and Ser-722 by RPS6KA1, which stimulates mTORC1 activity. Phosphorylation at Ser-791 by PKA downstream of cAMP inhibits the mTORC1 complex. Phosphorylated at Ser-877 by TBK1, leading to negative regulation of the mTORC1 complex. Post-translationally, O-GlcNAcylated by OGT upon glucose sufficiency, promoting interaction with small GTPases Rag (RagA/RRAGA, RagB/RRAGB, RagC/RRAGC and/or RagD/RRAGD) and subsequent recruitment of mTORC1 to lysosomal membranes, leading to activation of the mTORC1 complex. Phosphorylation at Ser-722 and Ser-792 by AMPK in response to glucose starvation inhibits O-GlcNAcylation. Acetylation at Lys-1097 by EP300/p300 in response to leucine metabolite acetyl-coA promotes its activity, leading to activation of the mTORC1 complex. Acetylation is decreased in response to fasting. Phosphorylated at Ser-877 by TBK1, leading to negative regulation of the mTORC1 complex. In terms of processing, ubiquitinated, leading to its degradation by the proteasome. Deubiquitinated by OTUB1 via a non-catalytic mechanism. Ubiquitinated by an E3 ubiquitin ligase complex containing VHL.

The protein resides in the cytoplasm. Its subcellular location is the lysosome. It is found in the cytoplasmic granule. In terms of biological role, component of the mechanistic target of rapamycin complex 1 (mTORC1), an evolutionarily conserved central nutrient sensor that stimulates anabolic reactions and macromolecule biosynthesis to promote cellular biomass generation and growth. In response to nutrients, growth factors or amino acids, mTORC1 is recruited to the lysosome membrane and promotes protein, lipid and nucleotide synthesis by phosphorylating several substrates, such as ribosomal protein S6 kinase (RPS6KB1 and RPS6KB2) and EIF4EBP1 (4E-BP1). In the same time, it inhibits catabolic pathways by phosphorylating the autophagy initiation components ULK1 and ATG13, as well as transcription factor TFEB, a master regulators of lysosomal biogenesis and autophagy. The mTORC1 complex is inhibited in response to starvation and amino acid depletion. Within the mTORC1 complex, RPTOR acts both as a molecular adapter, which (1) mediates recruitment of mTORC1 to lysosomal membranes via interaction with small GTPases Rag (RagA/RRAGA, RagB/RRAGB, RagC/RRAGC and/or RagD/RRAGD), and a (2) substrate-specific adapter, which promotes substrate specificity by binding to TOS motif-containing proteins and direct them towards the active site of the MTOR kinase domain for phosphorylation. mTORC1 complex regulates many cellular processes, such as odontoblast and osteoclast differentiation or neuronal transmission. mTORC1 complex in excitatory neuronal transmission is required for the prosocial behavior induced by the psychoactive substance lysergic acid diethylamide (LSD). The polypeptide is Regulatory-associated protein of mTOR (Mus musculus (Mouse)).